Reading from the N-terminus, the 412-residue chain is Probable tRNA sulfurtransferase (412 aa).

A disordered region spans residues 1–22 (MPDIFTDNTDKQDSDPSRQGFE). Residues 82–190 (PRAAEAAADV…QNLAYVYLET (109 aa)) enclose the THUMP domain. Residues 208–209 (LM), Lys-292, Gly-314, and Gln-323 each bind ATP.

This sequence belongs to the ThiI family.

The protein resides in the cytoplasm. The enzyme catalyses [ThiI sulfur-carrier protein]-S-sulfanyl-L-cysteine + a uridine in tRNA + 2 reduced [2Fe-2S]-[ferredoxin] + ATP + H(+) = [ThiI sulfur-carrier protein]-L-cysteine + a 4-thiouridine in tRNA + 2 oxidized [2Fe-2S]-[ferredoxin] + AMP + diphosphate. It catalyses the reaction [ThiS sulfur-carrier protein]-C-terminal Gly-Gly-AMP + S-sulfanyl-L-cysteinyl-[cysteine desulfurase] + AH2 = [ThiS sulfur-carrier protein]-C-terminal-Gly-aminoethanethioate + L-cysteinyl-[cysteine desulfurase] + A + AMP + 2 H(+). The protein operates within cofactor biosynthesis; thiamine diphosphate biosynthesis. Catalyzes the ATP-dependent transfer of a sulfur to tRNA to produce 4-thiouridine in position 8 of tRNAs, which functions as a near-UV photosensor. Also catalyzes the transfer of sulfur to the sulfur carrier protein ThiS, forming ThiS-thiocarboxylate. This is a step in the synthesis of thiazole, in the thiamine biosynthesis pathway. The sulfur is donated as persulfide by IscS. The protein is Probable tRNA sulfurtransferase of Methanosarcina acetivorans (strain ATCC 35395 / DSM 2834 / JCM 12185 / C2A).